A 699-amino-acid chain; its full sequence is MDLKFATFSSEIELPFYSALFSSKLDHDKLDSSARPVLGLYEPRSHASPEASTRMQILGSALTSDQDESGPLGMTRAEGYIKNVNTIEEFKNTDKNAMIKKAGEQIWDAIQDGTIYSCPSLLASFRILSYADLKKYKFTYWFAFPALHSEPQWKRTGPIGRLTSDESTALVERIGTWRYMVDRREHGFFLAKKVRREAAGPRSSLDDPGVDIGYRWDIGSLRDFETGFFNDAAEEDRYVAFVDPSNYPEYPSWPLRNLLILIRQRYRLNKVQILCYRDTQPRRHEARSTILPLAMDQVGDVELKCMPKVTGWERNGNGDLRPRVANLAEYMDPTRLADQAVDLNLKLMKWRLAPNLDLDAIKNTKCLLLGAGTLGSYVSRNLLGWGVRKITFIDYGSVSYSNPVRQPLFKFEDCHNGGKPKAIQAAEALKEIYPGVDVEGYALSVPMLDHAIHNEAKTKADFDKLKELIDSHDAIFLLMDTRESRWLPTLMGKAANKIVMNAALGFDTYVVMRHGAAPNDGSEETLGCYFCNDVVVAADSMKDQTLDQQCTVTRPGVAAIASALLVELLTSILQHPLKQHAPAPVSTGTGSAVSYERDPPDHPLGLVPHQVRGFLSNFQNMVIRGKSYPQCSACSKPILDAYKEGGWEFVKTALASRDYVAELSGLAEVQRLAEKAAAEMQWSEDEEGMDEEEGEGELI.

Residues 370–375 carry the GXGXXG motif motif; the sequence is GAGTLG. Catalysis depends on C550, which acts as the Glycyl thioester intermediate. Residues 680-699 form a disordered region; it reads MQWSEDEEGMDEEEGEGELI. Residues 682 to 699 are compositionally biased toward acidic residues; it reads WSEDEEGMDEEEGEGELI.

This sequence belongs to the ATG7 family. Homodimer.

It is found in the cytoplasm. Its subcellular location is the preautophagosomal structure. Functionally, E1-like activating enzyme involved in the 2 ubiquitin-like systems required for cytoplasm to vacuole transport (Cvt) and autophagy. Activates atg12 for its conjugation with apg-4/atg5 and apg-6/atg8 for its conjugation with phosphatidylethanolamine. Both systems are needed for the apg-6/atg8 association to Cvt vesicles and autophagosomes membranes. Autophagy is essential for maintenance of amino acid levels and protein synthesis under nitrogen starvation. Required for selective autophagic degradation of the nucleus (nucleophagy) as well as for mitophagy which contributes to regulate mitochondrial quantity and quality by eliminating the mitochondria to a basal level to fulfill cellular energy requirements and preventing excess ROS production. Plays a role in the regulation of filamentous growth and chronological longevity. In Neurospora crassa (strain ATCC 24698 / 74-OR23-1A / CBS 708.71 / DSM 1257 / FGSC 987), this protein is Ubiquitin-like modifier-activating enzyme atg7 (apg-5).